The primary structure comprises 119 residues: Membrane-anchored ubiquitin-fold protein 6 (119 aa).

One can recognise a Ubiquitin-like domain in the interval 8–76 (IELKFRLADG…NNRTLAESRL (69 aa)). Residue C114 is the site of S-palmitoyl cysteine attachment. C116 is subject to Cysteine methyl ester. C116 is lipidated: S-geranylgeranyl cysteine. Positions 117–119 (TIL) are cleaved as a propeptide — removed in mature form.

As to expression, ubiquitous.

The protein resides in the cell membrane. In terms of biological role, may serve as docking site to facilitate the association of other proteins to the plasma membrane. This Arabidopsis thaliana (Mouse-ear cress) protein is Membrane-anchored ubiquitin-fold protein 6 (MUB6).